The following is a 170-amino-acid chain: Peptide deformylase (170 aa).

2 residues coordinate Fe cation: cysteine 94 and histidine 136. The active site involves glutamate 137. Histidine 140 serves as a coordination point for Fe cation.

Belongs to the polypeptide deformylase family. Requires Fe(2+) as cofactor.

It catalyses the reaction N-terminal N-formyl-L-methionyl-[peptide] + H2O = N-terminal L-methionyl-[peptide] + formate. Removes the formyl group from the N-terminal Met of newly synthesized proteins. Requires at least a dipeptide for an efficient rate of reaction. N-terminal L-methionine is a prerequisite for activity but the enzyme has broad specificity at other positions. The polypeptide is Peptide deformylase (Xylella fastidiosa (strain 9a5c)).